The chain runs to 71 residues: Prophage lysis protein S homolog EssQ (71 aa).

It belongs to the lambda phage S protein family.

The polypeptide is Prophage lysis protein S homolog EssQ (essQ) (Escherichia coli (strain K12)).